Reading from the N-terminus, the 360-residue chain is Photosystem II protein D1 (360 aa).

Residues 1–28 (MTTTLQRRESANLWERFCNWVTSTDNRL) lie on the Cytoplasmic side of the membrane. The chain crosses the membrane as a helical span at residues 29 to 46 (YVGWFGVIMIPTLLAATI). Over 47–117 (CFVIAFIAAP…NGGPYQLIIF (71 aa)) the chain is Lumenal. His118 is a binding site for chlorophyll a. Residues 118–133 (HFLLGASCYMGRQWEL) form a helical membrane-spanning segment. Pheophytin a is bound by residues Tyr126 and Gln130. The Cytoplasmic segment spans residues 134–141 (SYRLGMRP). Residues 142–156 (WICVAYSAPLASAFA) traverse the membrane as a helical segment. Tyr147 contacts pheophytin a. Residues 157–196 (VFLIYPIGQGSFSDGMPLGISGTFNFMIVFQAEHNILMHP) are Lumenal-facing. 2 residues coordinate [CaMn4O5] cluster: Asp170 and Glu189. A helical transmembrane segment spans residues 197–218 (FHQLGVAGVFGGALFCAMHGSL). His198 serves as a coordination point for chlorophyll a. Met214 provides a ligand contact to pheophytin a. Residues His215 and 264-265 (SF) each bind a quinone. His215 is a binding site for Fe cation. Over 219-273 (VTSSLIRETTETESANYGYKFGQEEETYNIVAAHGYFGRLIFQYASFNNSRSLHF) the chain is Cytoplasmic. His272 contributes to the Fe cation binding site. Residues 274–288 (FLAAWRVVGVWFAAL) traverse the membrane as a helical segment. Over 289 to 360 (GISTMAFNLN…VAMIAPSING (72 aa)) the chain is Lumenal. Residues His332, Glu333, Asp342, and Ala344 each coordinate [CaMn4O5] cluster. The propeptide occupies 345 to 360 (SAESAPVAMIAPSING).

Belongs to the reaction center PufL/M/PsbA/D family. PSII is composed of 1 copy each of membrane proteins PsbA, PsbB, PsbC, PsbD, PsbE, PsbF, PsbH, PsbI, PsbJ, PsbK, PsbL, PsbM, PsbT, PsbX, PsbY, PsbZ, Psb30/Ycf12, peripheral proteins PsbO, CyanoQ (PsbQ), PsbU, PsbV and a large number of cofactors. It forms dimeric complexes. The D1/D2 heterodimer binds P680, chlorophylls that are the primary electron donor of PSII, and subsequent electron acceptors. It shares a non-heme iron and each subunit binds pheophytin, quinone, additional chlorophylls, carotenoids and lipids. D1 provides most of the ligands for the Mn4-Ca-O5 cluster of the oxygen-evolving complex (OEC). There is also a Cl(-1) ion associated with D1 and D2, which is required for oxygen evolution. The PSII complex binds additional chlorophylls, carotenoids and specific lipids. is required as a cofactor. In terms of processing, C-terminally processed by CtpA; processing is essential to allow assembly of the oxygen-evolving complex and thus photosynthetic growth. Post-translationally, tyr-161 forms a radical intermediate that is referred to as redox-active TyrZ, YZ or Y-Z.

Its subcellular location is the cellular thylakoid membrane. The enzyme catalyses 2 a plastoquinone + 4 hnu + 2 H2O = 2 a plastoquinol + O2. In terms of biological role, photosystem II (PSII) is a light-driven water:plastoquinone oxidoreductase that uses light energy to abstract electrons from H(2)O, generating O(2) and a proton gradient subsequently used for ATP formation. It consists of a core antenna complex that captures photons, and an electron transfer chain that converts photonic excitation into a charge separation. The D1/D2 (PsbA/PsbD) reaction center heterodimer binds P680, the primary electron donor of PSII as well as several subsequent electron acceptors. This Thermostichus vulcanus (Synechococcus vulcanus) protein is Photosystem II protein D1.